A 481-amino-acid chain; its full sequence is Mechanosensory protein 2 (481 aa).

The span at 1–22 (MSATMSSARNSVVSLSSNGSVK) shows a compositional bias: low complexity. 2 disordered regions span residues 1 to 67 (MSAT…MATR) and 80 to 104 (SANSDDDSVKKEKQAEKDVEKGNGK). The span at 27 to 38 (LVSNERSSSIQQ) shows a compositional bias: polar residues. Basic and acidic residues predominate over residues 86-104 (DSVKKEKQAEKDVEKGNGK). Residues 115 to 135 (GVCGWILTILSYLLIFFTLPI) form a helical membrane-spanning segment. Over residues 403–421 (EGGGGHGHSHGGGGGGLGS) the composition is skewed to gly residues. Residues 403-481 (EGGGGHGHSH…SQLDPALLIR (79 aa)) are disordered. Residues 433–447 (SGPSTTTTSGRPLLR) are compositionally biased toward low complexity. Over residues 463-473 (APNQSQTSVSQ) the composition is skewed to polar residues.

Belongs to the band 7/mec-2 family. In terms of assembly, component of a non-voltage-gated amiloride-sensitive cation channel complex (also called the degenerin channel complex) composed of at least the mec-2, mec-4, mec-6 and mec-10 subunits; the complex mediates mechanotransduction in touch cells. Interacts with mec-6 and mec-4.

It is found in the membrane. Subunit of an amiloride-sensitive cation channel (degenerin channel complex) permeable for sodium, potassium, lithium and N-methylglucamine, and required for mechanosensory transduction (touch sensitivity). Positively regulates the activity of the putative mechanosensory transduction channel. May link the mechanosensory channel and the microtubule cytoskeleton of the touch receptor neurons. Required for the function of a set of six touch receptor neurons. The chain is Mechanosensory protein 2 from Caenorhabditis elegans.